We begin with the raw amino-acid sequence, 28 residues long: 50 kDa venom protease (28 aa).

The protein belongs to the venom metalloproteinase (M12B) family. Requires Zn(2+) as cofactor. As to expression, expressed by the venom gland.

Its subcellular location is the secreted. The chain is 50 kDa venom protease from Proatheris superciliaris (Lowland swamp viper).